Here is a 1367-residue protein sequence, read N- to C-terminus: Phospholipid-transporting ATPase C4F10.16c (1367 aa).

The Cytoplasmic portion of the chain corresponds to 1–154 (MPSLINFDAI…PKNLWNQFKN (154 aa)). The disordered stretch occupies residues 34-104 (HNGSLAHEGP…KKNEAGTESG (71 aa)). Positions 50 to 70 (SSRHHESQFSQEAHAEQRSRD) are enriched in basic and acidic residues. Positions 77–92 (FEGSCNNSDQSWTSRV) are enriched in polar residues. A helical transmembrane segment spans residues 155 to 172 (IANAFFLFVTLLQCIPLF). The Lumenal portion of the chain corresponds to 173 to 177 (CPEHL). The chain crosses the membrane as a helical span at residues 178–197 (GLSFIPLSVILLTTAIKDGI). Residues 198 to 482 (EDYRRCVLDK…PSKRSRITRD (285 aa)) are Cytoplasmic-facing. The helical transmembrane segment at 483–503 (LNWTIILNFLLLFAMCLFSGV) threads the bilayer. Residues 504-531 (LRSIYSAQNNSARVFELSKNSNTAPAHG) lie on the Lumenal side of the membrane. The chain crosses the membrane as a helical span at residues 532–552 (IISIFTSLILFQNLVPISLYI). At 553–1091 (TMDIVRSIQS…GRWDYKRMSQ (539 aa)) the chain is on the cytoplasmic side. The active-site 4-aspartylphosphate intermediate is the aspartate 600. 15 residues coordinate ATP: aspartate 600, lysine 601, threonine 602, glutamate 724, phenylalanine 765, serine 767, lysine 770, lysine 788, arginine 822, threonine 823, threonine 902, glycine 903, aspartate 904, arginine 1009, and lysine 1015. A Mg(2+)-binding site is contributed by aspartate 600. Threonine 602 is a Mg(2+) binding site. Position 1035 (aspartate 1035) interacts with Mg(2+). ATP-binding residues include asparagine 1038 and aspartate 1039. Aspartate 1039 contacts Mg(2+). Residues 1092–1112 (MISFFFYKNVIWTFILFWYQF) form a helical membrane-spanning segment. Residues 1113-1124 (YNEFDGNYIFDY) lie on the Lumenal side of the membrane. Residues 1125 to 1145 (TYVMLFNLLFTSLPVIIAGCF) traverse the membrane as a helical segment. The Cytoplasmic segment spans residues 1146-1174 (DQDVDASVSMKNPSLYQRGILGLEWNGKR). Residues 1175–1197 (FWSYMLDGIYQSLVCFGVALFVF) traverse the membrane as a helical segment. Topologically, residues 1198–1212 (KFGDFVSWTGRNIEC) are lumenal. The helical transmembrane segment at 1213 to 1233 (IEDIGLFISSPTIFVINIFIL) threads the bilayer. Topologically, residues 1234-1240 (MNQERLN) are cytoplasmic. Residues 1241–1261 (LISLITWMFSIGVFWIWTFIY) traverse the membrane as a helical segment. The Lumenal segment spans residues 1262–1276 (SEVGPSYAFHKSASR). A helical membrane pass occupies residues 1277-1297 (TCQTFGFWCVTVLTIALCLLP). Position 1298 (arginine 1298) interacts with a 1,2-diacyl-sn-glycero-3-phospho-L-serine. Topologically, residues 1298-1367 (RFSYICLQKL…TSVSFDDSNK (70 aa)) are cytoplasmic.

The protein belongs to the cation transport ATPase (P-type) (TC 3.A.3) family. Type IV subfamily. Requires Mg(2+) as cofactor.

It is found in the cell membrane. The protein localises to the endoplasmic reticulum membrane. It carries out the reaction ATP + H2O + phospholipidSide 1 = ADP + phosphate + phospholipidSide 2.. The catalysed reaction is a 1,2-diacyl-sn-glycero-3-phosphoethanolamine(out) + ATP + H2O = a 1,2-diacyl-sn-glycero-3-phosphoethanolamine(in) + ADP + phosphate + H(+). It catalyses the reaction a 1,2-diacyl-sn-glycero-3-phosphocholine(out) + ATP + H2O = a 1,2-diacyl-sn-glycero-3-phosphocholine(in) + ADP + phosphate + H(+). The enzyme catalyses a beta-D-glucosyl-(1&lt;-&gt;1')-N-acylsphing-4-enine(out) + ATP + H2O = a beta-D-glucosyl-(1&lt;-&gt;1')-N-acylsphing-4-enine(in) + ADP + phosphate + H(+). It carries out the reaction a 1,2-diacyl-sn-glycero-3-phospho-L-serine(out) + ATP + H2O = a 1,2-diacyl-sn-glycero-3-phospho-L-serine(in) + ADP + phosphate + H(+). Catalytic component of a P4-ATPase flippase complex which catalyzes the hydrolysis of ATP coupled to the transport of glucosylceramide, phosphatidylcholine, phosphatidylethanolamine, and small amounts of phosphatidylserine from the lumenal to the cytosolic leaflet of the cell membrane and ensures the maintenance of asymmetric distribution of phospholipids. This is Phospholipid-transporting ATPase C4F10.16c from Schizosaccharomyces pombe (strain 972 / ATCC 24843) (Fission yeast).